The sequence spans 331 residues: Adenosine deaminase (331 aa).

Zn(2+) is bound by residues histidine 12 and histidine 14. Residues histidine 14, aspartate 16, and glycine 170 each coordinate substrate. Histidine 197 is a Zn(2+) binding site. Catalysis depends on glutamate 200, which acts as the Proton donor. Zn(2+) is bound at residue aspartate 278. A substrate-binding site is contributed by aspartate 279.

It belongs to the metallo-dependent hydrolases superfamily. Adenosine and AMP deaminases family. Adenosine deaminase subfamily. Zn(2+) is required as a cofactor.

It carries out the reaction adenosine + H2O + H(+) = inosine + NH4(+). The enzyme catalyses 2'-deoxyadenosine + H2O + H(+) = 2'-deoxyinosine + NH4(+). In terms of biological role, catalyzes the hydrolytic deamination of adenosine and 2-deoxyadenosine. The polypeptide is Adenosine deaminase (Shewanella baltica (strain OS155 / ATCC BAA-1091)).